Here is a 172-residue protein sequence, read N- to C-terminus: Bone marrow stromal antigen 2 (172 aa).

The Cytoplasmic portion of the chain corresponds to 1 to 26 (MAPSFYHYLPVAMDERWEPKGWSIRR). Lys20 participates in a covalent cross-link: Glycyl lysine isopeptide (Lys-Gly) (interchain with G-Cter in ubiquitin). A helical; Signal-anchor for type II membrane protein membrane pass occupies residues 27–47 (WWLVAAILVVLIGVVLVCLIV). Residues 48 to 152 (YFANAAHSEA…EISTTVQVNS (105 aa)) lie on the Extracellular side of the membrane. 2 N-linked (GlcNAc...) asparagine glycosylation sites follow: Asn70 and Asn97. Residues 103 to 149 (LRDSLKKKVSQTQEQQARIKELENKIERLNQELENLRTQKEISTTVQ) adopt a coiled-coil conformation. The GPI-anchor amidated serine moiety is linked to residue Ser152. The propeptide at 153–172 (GGSVVVSSLLVLVAVLFLHF) is removed in mature form.

Parallel homodimer; disulfide-linked. May form homotetramers under reducing conditions. Isoform 1 and isoform 2 form homodimers and also heterodimers with each other. Dimerization is essential for its antiviral activity. Interacts (via cytoplasmic domain) with ARHGAP44. Interacts with MMP14 (via C-terminal cytoplasmic tail). Interacts with LILRA4/ILT7. Interacts with RNF115. Post-translationally, N-glycosylated. In terms of processing, the GPI anchor is essential for its antiviral activity. As to expression, ubiquitously expressed, with highest levels in brain and liver. Present in liver (at protein level).

It is found in the golgi apparatus. The protein localises to the trans-Golgi network. The protein resides in the cell membrane. Its subcellular location is the late endosome. It localises to the membrane raft. It is found in the cytoplasm. The protein localises to the apical cell membrane. In terms of biological role, IFN-induced antiviral host restriction factor which efficiently blocks the release of diverse mammalian enveloped viruses by directly tethering nascent virions to the membranes of infected cells. Acts as a direct physical tether, holding virions to the cell membrane and linking virions to each other. The tethered virions can be internalized by endocytosis and subsequently degraded or they can remain on the cell surface. In either case, their spread as cell-free virions is restricted. Its target viruses belong to diverse families, including retroviridae: human immunodeficiency virus type 1 (HIV-1), mouse mammary tumor virus (MMTV) and murine leukemia virus (MLV), filoviridae: ebola virus (EBOV), arenaviridae: lassa virus (LASV), and rhabdoviridae: vesicular stomatitis virus (VSV). Can inhibit cell surface proteolytic activity of MMP14 causing decreased activation of MMP15 which results in inhibition of cell growth and migration. Can stimulate signaling by LILRA4/ILT7 and consequently provide negative feedback to the production of IFN by plasmacytoid dendritic cells in response to viral infection. Plays a role in the organization of the subapical actin cytoskeleton in polarized epithelial cells. In Rattus norvegicus (Rat), this protein is Bone marrow stromal antigen 2 (Bst2).